The following is a 344-amino-acid chain: Ion-translocating oxidoreductase complex subunit D (344 aa).

A run of 4 helical transmembrane segments spans residues 23–43 (LVLGACVPGLFTLTWLYGAGT), 44–64 (LLNLAWAGLVALACEAAMLAL), 80–100 (VTALLLAVALPPCAPWLLTLV), and 120–140 (PFNPAMLGYVVALVSFPLEMT). Thr172 carries the post-translational modification FMN phosphoryl threonine. The next 5 helical transmembrane spans lie at 198 to 218 (LGGAGGEWVNLAFLLGGLFLL), 222 to 242 (LFTWHAPLGMLAGLFAMSLLF), 252 to 272 (GSPLFHLFSGATMLGAFFIVT), 285 to 305 (LLFGLGVGVLTYLIRAWGGYP), and 306 to 326 (DGVAFAVLLMNLAAPTIDYYT).

The protein belongs to the NqrB/RnfD family. The complex is composed of six subunits: RnfA, RnfB, RnfC, RnfD, RnfE and RnfG. It depends on FMN as a cofactor.

The protein resides in the cell inner membrane. Functionally, part of a membrane-bound complex that couples electron transfer with translocation of ions across the membrane. This chain is Ion-translocating oxidoreductase complex subunit D, found in Pseudomonas paraeruginosa (strain DSM 24068 / PA7) (Pseudomonas aeruginosa (strain PA7)).